The sequence spans 66 residues: Muscarinic toxin 4 (66 aa).

4 disulfides stabilise this stretch: cysteine 3-cysteine 24, cysteine 17-cysteine 42, cysteine 46-cysteine 58, and cysteine 59-cysteine 64.

It belongs to the three-finger toxin family. Short-chain subfamily. Aminergic toxin sub-subfamily. In terms of assembly, monomer. As to expression, expressed by the venom gland.

Its subcellular location is the secreted. Its function is as follows. Binds to the muscarinic acetylcholine receptor (CHRM). The sequence is that of Muscarinic toxin 4 from Dendroaspis angusticeps (Eastern green mamba).